The primary structure comprises 111 residues: Large ribosomal subunit protein uL22 (111 aa).

Belongs to the universal ribosomal protein uL22 family. Part of the 50S ribosomal subunit.

This protein binds specifically to 23S rRNA; its binding is stimulated by other ribosomal proteins, e.g. L4, L17, and L20. It is important during the early stages of 50S assembly. It makes multiple contacts with different domains of the 23S rRNA in the assembled 50S subunit and ribosome. Its function is as follows. The globular domain of the protein is located near the polypeptide exit tunnel on the outside of the subunit, while an extended beta-hairpin is found that lines the wall of the exit tunnel in the center of the 70S ribosome. In Acidithiobacillus ferrooxidans (strain ATCC 23270 / DSM 14882 / CIP 104768 / NCIMB 8455) (Ferrobacillus ferrooxidans (strain ATCC 23270)), this protein is Large ribosomal subunit protein uL22.